A 1276-amino-acid chain; its full sequence is Histone-lysine N-methyltransferase PRDM16 (1276 aa).

Positions 1-10 (MRSKARARKL) are enriched in basic residues. Residues 1-68 (MRSKARARKL…DFTPKEGSPY (68 aa)) are disordered. Positions 82-211 (ADFELRESSI…PGEELLVHVK (130 aa)) constitute an SET domain. The C2H2-type 1; atypical zinc finger occupies 230 to 253 (FRCDECDELFQSKLDLRRHKKYTC). C2H2-type zinc fingers lie at residues 281-303 (HECK…MVIH), 309-331 (YKCD…QMSH), 337-360 (FECE…RSQH), 366-388 (HACP…KHIH), and 394-416 (FICE…KRMH). The segment at 423–445 (IKCKDCGQMFSTTSSLNKHRRFC) adopts a C2H2-type 7; atypical zinc-finger fold. Disordered regions lie at residues 533–657 (SLLK…APPG) and 772–804 (PFDL…QPLD). Residues 561-570 (AVSNSSQGTT) show a composition bias toward polar residues. Residues 575 to 597 (PEEKFESRLEDSCVEKLKTRSSD) are compositionally biased toward basic and acidic residues. Over residues 609–624 (TTTGTDLDTTTGTGSD) the composition is skewed to low complexity. Basic and acidic residues predominate over residues 632–642 (DPDKDKGKGKS). Residues 679-1038 (DEQLLTATGA…KHEHENAPVS (360 aa)) form an interaction with CTBP1, CTBP2 and ZNF516 region. The interval 739-1276 (PFTDRALAHN…SGAFHPINHL (538 aa)) is mediates interaction with SKI and regulation of TGF-beta signaling. 3 C2H2-type zinc fingers span residues 951 to 973 (YTCR…LRTH), 979 to 1002 (YRCK…RNIH), and 1008 to 1032 (FKCH…KHEH). 2 disordered regions span residues 1033–1065 (ENAP…HALL) and 1105–1163 (AQCP…EPAA). Residues 1047 to 1058 (HLGTSASSPTSE) are compositionally biased toward polar residues. The span at 1116–1133 (EDVEEEDDDDLEEDDEDS) shows a compositional bias: acidic residues.

This sequence belongs to the PRDM16 family. As to quaternary structure, interacts with CEBPA, CEBPB and CEBPD; the interaction is direct. Interacts with PPARG and PPARA; controls brown adipocytes differentiation. Interacts with CTBP1 and CTBP2; represses the expression of WAT-specific genes. Interacts with PPARGC1A and PPARGC1B; interaction with PPARGC1A or PPARGC1B activates the transcription of BAT-specific gene. Interacts with HDAC1, SKI, SMAD2 and SMAD3; the interaction with SKI promotes the recruitment of SMAD3-HDAC1 complex on the promoter of TGF-beta target genes. Interacts with ZNF516; the interaction is direct and may play a role in the transcription of brown adipose tissue-specific gene. Expressed in uterus and kidney. Expressed in both cardiomyocytes and interstitial cells.

The protein localises to the nucleus. The protein resides in the cytoplasm. The catalysed reaction is L-lysyl(9)-[histone H3] + S-adenosyl-L-methionine = N(6)-methyl-L-lysyl(9)-[histone H3] + S-adenosyl-L-homocysteine + H(+). Functionally, binds DNA and functions as a transcriptional regulator. Displays histone methyltransferase activity and monomethylates 'Lys-9' of histone H3 (H3K9me1) in vitro. Probably catalyzes the monomethylation of free histone H3 in the cytoplasm which is then transported to the nucleus and incorporated into nucleosomes where SUV39H methyltransferases use it as a substrate to catalyze histone H3 'Lys-9' trimethylation. Likely to be one of the primary histone methyltransferases along with MECOM/PRDM3 that direct cytoplasmic H3K9me1 methylation. Functions in the differentiation of brown adipose tissue (BAT) which is specialized in dissipating chemical energy in the form of heat in response to cold or excess feeding while white adipose tissue (WAT) is specialized in the storage of excess energy and the control of systemic metabolism. Together with CEBPB, regulates the differentiation of myoblastic precursors into brown adipose cells. Functions as a repressor of TGF-beta signaling. Binds DNA and functions as a transcriptional regulator. Functions as a repressor of TGF-beta signaling. May regulate granulocyte differentiation. The polypeptide is Histone-lysine N-methyltransferase PRDM16 (Homo sapiens (Human)).